Here is a 241-residue protein sequence, read N- to C-terminus: Ribosomal RNA small subunit methyltransferase J (241 aa).

S-adenosyl-L-methionine-binding positions include 94–95 and Asp-163; that span reads RD.

This sequence belongs to the methyltransferase superfamily. RsmJ family.

It is found in the cytoplasm. It carries out the reaction guanosine(1516) in 16S rRNA + S-adenosyl-L-methionine = N(2)-methylguanosine(1516) in 16S rRNA + S-adenosyl-L-homocysteine + H(+). Functionally, specifically methylates the guanosine in position 1516 of 16S rRNA. In Francisella tularensis subsp. tularensis (strain FSC 198), this protein is Ribosomal RNA small subunit methyltransferase J.